Here is a 230-residue protein sequence, read N- to C-terminus: Cytidylate kinase (230 aa).

Gly12–Thr20 is an ATP binding site.

It belongs to the cytidylate kinase family. Type 1 subfamily.

It localises to the cytoplasm. The catalysed reaction is CMP + ATP = CDP + ADP. The enzyme catalyses dCMP + ATP = dCDP + ADP. The chain is Cytidylate kinase from Corynebacterium glutamicum (strain ATCC 13032 / DSM 20300 / JCM 1318 / BCRC 11384 / CCUG 27702 / LMG 3730 / NBRC 12168 / NCIMB 10025 / NRRL B-2784 / 534).